The sequence spans 379 residues: UDP-4-amino-4-deoxy-L-arabinose--oxoglutarate aminotransferase (379 aa).

Lys182 is modified (N6-(pyridoxal phosphate)lysine).

This sequence belongs to the DegT/DnrJ/EryC1 family. ArnB subfamily. As to quaternary structure, homodimer. Pyridoxal 5'-phosphate serves as cofactor.

The catalysed reaction is UDP-4-amino-4-deoxy-beta-L-arabinose + 2-oxoglutarate = UDP-beta-L-threo-pentopyranos-4-ulose + L-glutamate. Its pathway is nucleotide-sugar biosynthesis; UDP-4-deoxy-4-formamido-beta-L-arabinose biosynthesis; UDP-4-deoxy-4-formamido-beta-L-arabinose from UDP-alpha-D-glucuronate: step 2/3. It functions in the pathway bacterial outer membrane biogenesis; lipopolysaccharide biosynthesis. Catalyzes the conversion of UDP-4-keto-arabinose (UDP-Ara4O) to UDP-4-amino-4-deoxy-L-arabinose (UDP-L-Ara4N). The modified arabinose is attached to lipid A and is required for resistance to polymyxin and cationic antimicrobial peptides. In Escherichia fergusonii (strain ATCC 35469 / DSM 13698 / CCUG 18766 / IAM 14443 / JCM 21226 / LMG 7866 / NBRC 102419 / NCTC 12128 / CDC 0568-73), this protein is UDP-4-amino-4-deoxy-L-arabinose--oxoglutarate aminotransferase.